The primary structure comprises 214 residues: Holliday junction branch migration complex subunit RuvA (214 aa).

The domain I stretch occupies residues 1 to 63 (MISSLRGTVL…EDSLTLFGFP (63 aa)). Residues 64 to 139 (GPDELRAFEL…KLFVTQPRAR (76 aa)) form a domain II region. The flexible linker stretch occupies residues 139–143 (RSATS). A domain III region spans residues 144–214 (AASTVTADVV…AAPTGQAADR (71 aa)).

This sequence belongs to the RuvA family. Homotetramer. Forms an RuvA(8)-RuvB(12)-Holliday junction (HJ) complex. HJ DNA is sandwiched between 2 RuvA tetramers; dsDNA enters through RuvA and exits via RuvB. An RuvB hexamer assembles on each DNA strand where it exits the tetramer. Each RuvB hexamer is contacted by two RuvA subunits (via domain III) on 2 adjacent RuvB subunits; this complex drives branch migration. In the full resolvosome a probable DNA-RuvA(4)-RuvB(12)-RuvC(2) complex forms which resolves the HJ.

It localises to the cytoplasm. The RuvA-RuvB-RuvC complex processes Holliday junction (HJ) DNA during genetic recombination and DNA repair, while the RuvA-RuvB complex plays an important role in the rescue of blocked DNA replication forks via replication fork reversal (RFR). RuvA specifically binds to HJ cruciform DNA, conferring on it an open structure. The RuvB hexamer acts as an ATP-dependent pump, pulling dsDNA into and through the RuvAB complex. HJ branch migration allows RuvC to scan DNA until it finds its consensus sequence, where it cleaves and resolves the cruciform DNA. The sequence is that of Holliday junction branch migration complex subunit RuvA from Clavibacter michiganensis subsp. michiganensis (strain NCPPB 382).